Consider the following 440-residue polypeptide: MLSVSEVNRRIAGLLERHFALGWVRGEISNFTRAGSGHWYFSLKDAGAQIRCVMFKGRNQYADFTPREGEAIEVRALVTLYEARGELQLSVEAIRRAGLGNLYEAFLRLKAALEAQGLFDAARKRPLPRHPHAIGVVTSLQAAALRDVLTTLHRRAPHVPVVVYPVPVQGAGAAERIAAMLDLVNARAEVDVIILCRGGGSIEDLWAFNEEPVARAVAASDIPIVAGVGHETDVTIVDFVADVRAPTPTGAAELVSPDRARMLRDVAGCWDALSATLRRQLDRRAQTVDWLARRLRSPQAQMRERRAGLAHLEGRLRFALHGRVQRAEHGQRLLAMRLDAARPDIARERTALQGIEAALARAMRATLDRAQTRLSHHQAGLELLAPQRTLERGYAVLLDAKGQAIRDPAALHARARIEARLARGAVDIEIAQVQPKLPEM.

This sequence belongs to the XseA family. As to quaternary structure, heterooligomer composed of large and small subunits.

Its subcellular location is the cytoplasm. It carries out the reaction Exonucleolytic cleavage in either 5'- to 3'- or 3'- to 5'-direction to yield nucleoside 5'-phosphates.. Functionally, bidirectionally degrades single-stranded DNA into large acid-insoluble oligonucleotides, which are then degraded further into small acid-soluble oligonucleotides. The polypeptide is Exodeoxyribonuclease 7 large subunit (Ralstonia nicotianae (strain ATCC BAA-1114 / GMI1000) (Ralstonia solanacearum)).